A 510-amino-acid chain; its full sequence is Inositol-3-phosphate synthase (510 aa).

NAD(+) is bound by residues Gly70, Gly71, Asn72, Asn73, Asp143, Ile180, Gln190, Arg193, Thr230, Ala231, Asn232, Thr233, Gly281, Ser282, Asp306, Ser309, Asn340, Asn341, Asp342, Lys355, Gly393, Asp394, Asp422, and Ser423.

Belongs to the myo-inositol 1-phosphate synthase family. It depends on NAD(+) as a cofactor.

Its subcellular location is the cytoplasm. The protein localises to the cytosol. It is found in the nucleus. It carries out the reaction D-glucose 6-phosphate = 1D-myo-inositol 3-phosphate. It functions in the pathway polyol metabolism; myo-inositol biosynthesis; myo-inositol from D-glucose 6-phosphate: step 1/2. Its function is as follows. Key enzyme in myo-inositol biosynthesis pathway that catalyzes the conversion of glucose 6-phosphate to 1-myo-inositol 1-phosphate in a NAD-dependent manner. The chain is Inositol-3-phosphate synthase from Sesamum indicum (Oriental sesame).